Consider the following 157-residue polypeptide: Ribosome maturation factor RimM (157 aa).

One can recognise a PRC barrel domain in the interval 89–156; that stretch reads PGEYYHVDLI…DRLLIDPEFV (68 aa).

Belongs to the RimM family. As to quaternary structure, binds ribosomal protein uS19.

The protein localises to the cytoplasm. In terms of biological role, an accessory protein needed during the final step in the assembly of 30S ribosomal subunit, possibly for assembly of the head region. Essential for efficient processing of 16S rRNA. May be needed both before and after RbfA during the maturation of 16S rRNA. It has affinity for free ribosomal 30S subunits but not for 70S ribosomes. This chain is Ribosome maturation factor RimM, found in Rhizorhabdus wittichii (strain DSM 6014 / CCUG 31198 / JCM 15750 / NBRC 105917 / EY 4224 / RW1) (Sphingomonas wittichii).